The chain runs to 250 residues: Electron transport regulator A (250 aa).

The HTH crp-type domain occupies 164-237; it reads KNAEERLAAF…GKYIIIVDHH (74 aa). The segment at residues 197–216 is a DNA-binding region (H-T-H motif); that stretch reads RGDIGNYLGLTVETISRLLG.

As to quaternary structure, monomer.

Functionally, regulates anaerobic growth on fumarate, nitrite, Fe(3+), TMAO, DMSO, thiosulfate and sulfite, but not on nitrate nor Mn(4+). The polypeptide is Electron transport regulator A (etrA) (Shewanella oneidensis (strain ATCC 700550 / JCM 31522 / CIP 106686 / LMG 19005 / NCIMB 14063 / MR-1)).